The primary structure comprises 511 residues: V-type proton ATPase subunit B, brain isoform (511 aa).

R400 is a binding site for ATP.

It belongs to the ATPase alpha/beta chains family. V-ATPase is a heteromultimeric enzyme made up of two complexes: the ATP-hydrolytic V1 complex and the proton translocation V0 complex. The V1 complex consists of three catalytic AB heterodimers that form a heterohexamer, three peripheral stalks each consisting of EG heterodimers, one central rotor including subunits D and F, and the regulatory subunits C and H. The proton translocation complex V0 consists of the proton transport subunit a, a ring of proteolipid subunits c9c'', rotary subunit d, subunits e and f, and the accessory subunits ATP6AP1/Ac45 and ATP6AP2/PRR. In terms of tissue distribution, kidney; found in early distal nephron, encompassing thick ascending limbs and distal convoluted tubules and in the alpha-intercalated cells of the cortical collecting ducts (at protein level). Expressed in epididymal clear cells (at protein level). Mainly expressed in the organ of Corti and spiral ganglion neurons, in both the early postnatal cochlea (P2) and the adult cochlea (P30).

It is found in the apical cell membrane. It localises to the melanosome. The protein resides in the cytoplasm. Its subcellular location is the cytoplasmic vesicle. The protein localises to the secretory vesicle. It is found in the synaptic vesicle membrane. It localises to the clathrin-coated vesicle membrane. In terms of biological role, non-catalytic subunit of the V1 complex of vacuolar(H+)-ATPase (V-ATPase), a multisubunit enzyme composed of a peripheral complex (V1) that hydrolyzes ATP and a membrane integral complex (V0) that translocates protons. V-ATPase is responsible for acidifying and maintaining the pH of intracellular compartments and in some cell types, is targeted to the plasma membrane, where it is responsible for acidifying the extracellular environment. In renal intercalated cells, can partially compensate the lack of ATP6V1B1 and mediate secretion of protons (H+) into the urine under base-line conditions but not in conditions of acid load. The sequence is that of V-type proton ATPase subunit B, brain isoform (Atp6v1b2) from Mus musculus (Mouse).